A 247-amino-acid polypeptide reads, in one-letter code: Triosephosphate isomerase (247 aa).

Residues asparagine 10 and lysine 12 each coordinate substrate. The active-site Electrophile is histidine 94. Residue glutamate 164 is the Proton acceptor of the active site.

The protein belongs to the triosephosphate isomerase family. As to quaternary structure, homodimer.

Its subcellular location is the cytoplasm. The catalysed reaction is D-glyceraldehyde 3-phosphate = dihydroxyacetone phosphate. The enzyme catalyses dihydroxyacetone phosphate = methylglyoxal + phosphate. Its pathway is carbohydrate biosynthesis; gluconeogenesis. It participates in carbohydrate degradation; glycolysis; D-glyceraldehyde 3-phosphate from glycerone phosphate: step 1/1. In terms of biological role, triosephosphate isomerase is an extremely efficient metabolic enzyme that catalyzes the interconversion between dihydroxyacetone phosphate (DHAP) and D-glyceraldehyde-3-phosphate (G3P) in glycolysis and gluconeogenesis. Its function is as follows. It is also responsible for the non-negligible production of methylglyoxal a reactive cytotoxic side-product that modifies and can alter proteins, DNA and lipids. This Caenorhabditis elegans protein is Triosephosphate isomerase (tpi-1).